The chain runs to 536 residues: ATP synthase subunit alpha, mitochondrial (536 aa).

The N-terminal 24 residues, 1–24, are a transit peptide targeting the mitochondrion; it reads MFKNALRRAGVAAPRISRVAQRGY. 195 to 202 contacts ATP; sequence GDRQTGKT.

F-type ATP synthases have 2 components, the catalytic core F(1) and the membrane-embedded component F(0), linked together by a central stalk and a peripheral stalk. The central stalk, also called rotor shaft, is often seen as part of F(1). The peripheral stalk is seen as part of F(0). F(0) contains the membrane channel next to the rotor. F-type ATP synthases form dimers but each monomer functions independently in ATP generation. The dimer consists of 17 different polypeptides: ATP1 (subunit alpha, 3 molecules per monomer, part of F(1)), ATP2 (subunit beta, 3 copies per monomer, part of F(1)), ATP3 (subunit gamma, part of the central stalk), ATP4 (subunit b, part of the peripheral stalk), ATP5/OSCP (subunit 5/OSCP, part of the peripheral stalk), ATP6 (subunit a, part of the peripheral stalk), ATP7 (subunit d, part of the peripheral stalk), ATP8 (subunit 8, part of the peripheral stalk), OLI1 (subunit c, part of the rotor, 10 molecules per monomer), ATP14 (subunit h, part of the peripheral stalk), ATP15 (subunit epsilon, part of the central stalk), ATP16 (subunit delta, part of the central stalk), ATP17 (subunit f, part of the peripheral stalk), ATP18 (subunit i/j, part of the peripheral stalk), ATP19 (subunit k, dimer-specific, at interface between monomers), ATP20 (subunit g, at interface between monomers), TIM11 (subunit e, at interface between monomers).

The protein resides in the mitochondrion inner membrane. Its function is as follows. Mitochondrial membrane ATP synthase (F(1)F(0) ATP synthase or Complex V) produces ATP from ADP in the presence of a proton gradient across the membrane which is generated by electron transport complexes of the respiratory chain. F-type ATP synthases consist of two structural domains, F(1) - containing the extramembraneous catalytic core, and F(0) - containing the membrane proton channel, linked together by a central stalk and a peripheral stalk. During catalysis, ATP synthesis in the catalytic domain of F(1) is coupled via a rotary mechanism of the central stalk subunits to proton translocation. Subunits alpha/ATP1 and beta/ATP2 form the catalytic core in F(1). Rotation of the central stalk against the surrounding alpha/ATP1(3)beta/ATP2(3) subunits leads to hydrolysis of ATP in three separate catalytic sites on the beta/ATP2 subunits. Subunit alpha/ATP1 does not bear the catalytic high-affinity ATP-binding sites. In Yarrowia lipolytica (strain CLIB 122 / E 150) (Yeast), this protein is ATP synthase subunit alpha, mitochondrial.